The sequence spans 1969 residues: Myosin-3 (1969 aa).

The 50-residue stretch at 33–82 folds into the Myosin N-terminal SH3-like domain; sequence DSKKNCWIPDPEDGFVAAEIQSTTGDQVTVVTVKGNQITVKKDQCQEMNP. The Myosin motor domain occupies 86-791; that stretch reads DKTEDMANLT…VLAKLEDLRD (706 aa). Lys-130 is modified (N6,N6,N6-trimethyllysine). 179–186 serves as a coordination point for ATP; the sequence is GESGAGKT. Actin-binding regions lie at residues 667–689 and 770–784; these read LNNL…IPNE and KIGE…GVLA. The region spanning 794–823 is the IQ domain; it reads LSRIVTMFQSRIRSYLAKAEVRRRYEQQTG. Residues 853–1941 adopt a coiled-coil conformation; sequence LKAGKEQEAM…KMRNKIRASA (1089 aa). Disordered stretches follow at residues 943-967, 993-1029, and 1134-1153; these read QERH…KKHV, DEMA…EEDK, and ELES…NELQ. Basic and acidic residues-rich tracts occupy residues 1001 to 1029 and 1137 to 1153; these read SVAK…EEDK and SERN…NELQ.

Belongs to the TRAFAC class myosin-kinesin ATPase superfamily. Myosin family. As to quaternary structure, muscle myosin is a hexameric protein that consists of 2 heavy chain subunits (MHC), 2 alkali light chain subunits (MLC) and 2 regulatory light chain subunits (MLC-2).

Its subcellular location is the cytoplasm. It localises to the myofibril. The protein localises to the sarcomere. The protein resides in the a band. Essential for muscle contraction. Involved in ovulation likely by regulating the contraction of gonadal myoepithelial sheath cells. This chain is Myosin-3, found in Caenorhabditis briggsae.